Consider the following 154-residue polypeptide: Large ribosomal subunit protein bL19 (154 aa).

The tract at residues 1–33 (MAADPKDTTVTDENTETAATAEVETVASAPTSP) is disordered. Residues 16-27 (ETAATAEVETVA) are compositionally biased toward low complexity.

It belongs to the bacterial ribosomal protein bL19 family.

Its function is as follows. This protein is located at the 30S-50S ribosomal subunit interface and may play a role in the structure and function of the aminoacyl-tRNA binding site. This is Large ribosomal subunit protein bL19 from Parasynechococcus marenigrum (strain WH8102).